Reading from the N-terminus, the 542-residue chain is Chaperonin GroEL (542 aa).

ATP is bound by residues Thr29–Pro32, Lys50, Asp86–Thr90, Gly414, Asn477–Ala479, and Asp493.

This sequence belongs to the chaperonin (HSP60) family. In terms of assembly, forms a cylinder of 14 subunits composed of two heptameric rings stacked back-to-back. Interacts with the co-chaperonin GroES.

It is found in the cytoplasm. It carries out the reaction ATP + H2O + a folded polypeptide = ADP + phosphate + an unfolded polypeptide.. Functionally, together with its co-chaperonin GroES, plays an essential role in assisting protein folding. The GroEL-GroES system forms a nano-cage that allows encapsulation of the non-native substrate proteins and provides a physical environment optimized to promote and accelerate protein folding. This is Chaperonin GroEL from Sulfurimonas denitrificans (strain ATCC 33889 / DSM 1251) (Thiomicrospira denitrificans (strain ATCC 33889 / DSM 1251)).